The chain runs to 182 residues: Ribosome-recycling factor (182 aa).

It belongs to the RRF family.

It localises to the cytoplasm. Responsible for the release of ribosomes from messenger RNA at the termination of protein biosynthesis. May increase the efficiency of translation by recycling ribosomes from one round of translation to another. The polypeptide is Ribosome-recycling factor (Nostoc punctiforme (strain ATCC 29133 / PCC 73102)).